Reading from the N-terminus, the 296-residue chain is tRNA uridine(34) hydroxylase (296 aa).

The 96-residue stretch at 130–225 (RGDDVVFFDG…YGEAYGNDGY (96 aa)) folds into the Rhodanese domain. Cys185 serves as the catalytic Cysteine persulfide intermediate.

It belongs to the TrhO family.

It catalyses the reaction uridine(34) in tRNA + AH2 + O2 = 5-hydroxyuridine(34) in tRNA + A + H2O. Its function is as follows. Catalyzes oxygen-dependent 5-hydroxyuridine (ho5U) modification at position 34 in tRNAs. This chain is tRNA uridine(34) hydroxylase, found in Corynebacterium kroppenstedtii (strain DSM 44385 / JCM 11950 / CIP 105744 / CCUG 35717).